The primary structure comprises 253 residues: Demethylmenaquinone methyltransferase (253 aa).

S-adenosyl-L-methionine contacts are provided by residues Thr-62, Asp-80, 102-103, and Ser-119; that span reads DA.

Belongs to the class I-like SAM-binding methyltransferase superfamily. MenG/UbiE family.

The catalysed reaction is a 2-demethylmenaquinol + S-adenosyl-L-methionine = a menaquinol + S-adenosyl-L-homocysteine + H(+). The protein operates within quinol/quinone metabolism; menaquinone biosynthesis; menaquinol from 1,4-dihydroxy-2-naphthoate: step 2/2. Methyltransferase required for the conversion of demethylmenaquinol (DMKH2) to menaquinol (MKH2). In Paenarthrobacter aurescens (strain TC1), this protein is Demethylmenaquinone methyltransferase.